The sequence spans 357 residues: Peptide chain release factor 1 (357 aa).

Residue Gln-232 is modified to N5-methylglutamine.

It belongs to the prokaryotic/mitochondrial release factor family. Methylated by PrmC. Methylation increases the termination efficiency of RF1.

The protein localises to the cytoplasm. Functionally, peptide chain release factor 1 directs the termination of translation in response to the peptide chain termination codons UAG and UAA. The protein is Peptide chain release factor 1 of Nitratidesulfovibrio vulgaris (strain ATCC 29579 / DSM 644 / CCUG 34227 / NCIMB 8303 / VKM B-1760 / Hildenborough) (Desulfovibrio vulgaris).